The sequence spans 85 residues: Large ribosomal subunit protein bL27 (85 aa).

Residues 1 to 25 (MAHKKAGSSSKNGRDSNPQYLGVKR) are disordered. Residues 7–19 (GSSSKNGRDSNPQ) show a composition bias toward polar residues.

This sequence belongs to the bacterial ribosomal protein bL27 family.

The protein is Large ribosomal subunit protein bL27 of Micrococcus luteus (strain ATCC 4698 / DSM 20030 / JCM 1464 / CCM 169 / CCUG 5858 / IAM 1056 / NBRC 3333 / NCIMB 9278 / NCTC 2665 / VKM Ac-2230) (Micrococcus lysodeikticus).